The following is a 434-amino-acid chain: Transcription initiation factor IIE subunit alpha (434 aa).

An HTH TFE/IIEalpha-type domain is found at V8–K99. A C4-type zinc finger spans residues C124 to C151. Disordered regions lie at residues Q217–E251, S357–E408, and I415–V434. Residues D226–V238 show a composition bias toward polar residues. Basic and acidic residues-rich tracts occupy residues S241–E251 and I376–E385. Polar residues predominate over residues E386–I399. Positions N419–V434 are enriched in acidic residues.

Belongs to the TFIIE alpha subunit family. TFIIE is a tetramer of two alpha (tfa1) and two beta (tfa2) subunits.

It localises to the nucleus. In terms of biological role, recruits TFIIH to the initiation complex and stimulates the RNA polymerase II C-terminal domain kinase and DNA-dependent ATPase activities of TFIIH. Both TFIIH and TFIIE are required for promoter clearance by RNA polymerase. The chain is Transcription initiation factor IIE subunit alpha (tfa1) from Schizosaccharomyces pombe (strain 972 / ATCC 24843) (Fission yeast).